The primary structure comprises 167 residues: 18.8 kDa class II heat shock protein (167 aa).

The sHSP domain maps to Asp49 to Ala167.

This sequence belongs to the small heat shock protein (HSP20) family.

It localises to the cytoplasm. The chain is 18.8 kDa class II heat shock protein (SHSP-2) from Ipomoea nil (Japanese morning glory).